The sequence spans 619 residues: Nuclear hormone receptor family member nhr-6 (619 aa).

Polar residues predominate over residues M1–C18. Disordered stretches follow at residues M1–S29, M58–T86, Q103–P134, and Q196–P232. Low complexity predominate over residues S19–S29. Residues K125 to P134 are compositionally biased toward polar residues. Low complexity predominate over residues G206 to P232. The nuclear receptor DNA-binding region spans D265–H340. 2 NR C4-type zinc fingers span residues C268 to C288 and C304 to C328. A disordered region spans residues G345–P365. Residues R346–L356 show a composition bias toward basic residues. In terms of domain architecture, NR LBD spans P365–S600. An AF-2 region spans residues L589–S600.

This sequence belongs to the nuclear hormone receptor family. NR4 subfamily. In terms of tissue distribution, in hermaphrodites, expressed in the developing spermatheca and dorsal uterus. Expression includes the 8 cells of the dorsal somatic gonad primordium and the sujc cells that form the core of the spermatheca-uterine valve. Expressed in the precursor cells of the spermatheca-sheath lineages (SS cells) and in the precursors and descendents of the dorsal-uterine lineage (DU cells). In both hermaphroditic and male animals, expressed in a pair of head chemosensory neurons.

Its subcellular location is the nucleus. Functionally, transcriptional activator that induces gene expression by binding to the NGFI-B response element (NBRE) 5'-AAAGGTCA-3'. Required for proper morphogenesis of the spermatheca and the spermatheca-uterine valve formation. Promotes cell proliferation and differentiation of the spermatheca precursor cells during spermatheca development in larval stage L4. Might play a role in promoting G1/S phase progression in the spermatheca precursor cell lineage. Also required for the differentiation of the spermatheca-uterine junction core (sujc) cells which are generating the spermatheca-uterine valve. The sequence is that of Nuclear hormone receptor family member nhr-6 (nhr-6) from Caenorhabditis elegans.